Here is a 323-residue protein sequence, read N- to C-terminus: Phosphoribosylformylglycinamidine cyclo-ligase (323 aa).

Belongs to the AIR synthase family.

Its subcellular location is the cytoplasm. It carries out the reaction 2-formamido-N(1)-(5-O-phospho-beta-D-ribosyl)acetamidine + ATP = 5-amino-1-(5-phospho-beta-D-ribosyl)imidazole + ADP + phosphate + H(+). It participates in purine metabolism; IMP biosynthesis via de novo pathway; 5-amino-1-(5-phospho-D-ribosyl)imidazole from N(2)-formyl-N(1)-(5-phospho-D-ribosyl)glycinamide: step 2/2. This is Phosphoribosylformylglycinamidine cyclo-ligase from Saccharolobus solfataricus (strain ATCC 35092 / DSM 1617 / JCM 11322 / P2) (Sulfolobus solfataricus).